The following is a 351-amino-acid chain: Adenine deaminase (351 aa).

Zn(2+)-binding residues include His-20, His-22, and His-200. Glu-203 (proton donor) is an active-site residue. Asp-281 serves as a coordination point for Zn(2+). Asp-282 lines the substrate pocket.

Belongs to the metallo-dependent hydrolases superfamily. Adenosine and AMP deaminases family. Adenine deaminase type 2 subfamily. It depends on Zn(2+) as a cofactor.

The enzyme catalyses adenine + H2O + H(+) = hypoxanthine + NH4(+). Functionally, catalyzes the hydrolytic deamination of adenine to hypoxanthine. Plays an important role in the purine salvage pathway and in nitrogen catabolism. This is Adenine deaminase from Cupriavidus pinatubonensis (strain JMP 134 / LMG 1197) (Cupriavidus necator (strain JMP 134)).